The sequence spans 172 residues: Melanocortin-2 receptor accessory protein (172 aa).

A helical transmembrane segment spans residues 38–58 (IVIAFWVSLAAFVVLLFLILL). Disordered stretches follow at residues 105 to 136 (QAQASSVEPGSRTGPDQPLRQESSSTLPLGGF) and 151 to 172 (GPLVRSKPSEPPPGDRTSQLQS).

This sequence belongs to the MRAP family. In terms of assembly, homodimer and heterodimer. Forms antiparallel homodimers and heterodimers with MRAP2. Interacts with MC1R, MC2R, MC3R, MC4R and MC5R. Expressed in adrenal cortex, testis, breast, thyroid, lymph node, ovary and fat. Expressed in adipose tissues.

It localises to the cell membrane. Its subcellular location is the endoplasmic reticulum membrane. Modulator of melanocortin receptors (MC1R, MC2R, MC3R, MC4R and MC5R). Acts by increasing ligand-sensitivity of melanocortin receptors and enhancing generation of cAMP by the receptors. Required both for MC2R trafficking to the cell surface of adrenal cells and for signaling in response to corticotropin (ACTH). May be involved in the intracellular trafficking pathways in adipocyte cells. This chain is Melanocortin-2 receptor accessory protein (MRAP), found in Homo sapiens (Human).